We begin with the raw amino-acid sequence, 122 residues long: Large ribosomal subunit protein uL14 (122 aa).

The protein belongs to the universal ribosomal protein uL14 family. As to quaternary structure, part of the 50S ribosomal subunit. Forms a cluster with proteins L3 and L19. In the 70S ribosome, L14 and L19 interact and together make contacts with the 16S rRNA in bridges B5 and B8.

Its function is as follows. Binds to 23S rRNA. Forms part of two intersubunit bridges in the 70S ribosome. This Buchnera aphidicola subsp. Acyrthosiphon pisum (strain 5A) protein is Large ribosomal subunit protein uL14.